The following is a 137-amino-acid chain: Large ribosomal subunit protein uL16c (137 aa).

This sequence belongs to the universal ribosomal protein uL16 family. Part of the 50S ribosomal subunit.

It localises to the plastid. The sequence is that of Large ribosomal subunit protein uL16c (rpl16) from Helicosporidium sp. subsp. Simulium jonesii (Green alga).